A 609-amino-acid polypeptide reads, in one-letter code: Non-structural glycoprotein (609 aa).

The first 24 residues, Met-1–Gly-24, serve as a signal peptide directing secretion. Residues Gly-25–Asn-581 are Extracellular-facing. N-linked (GlcNAc...) asparagine; by host glycosylation is found at Asn-87, Asn-375, Asn-465, Asn-472, Asn-478, Asn-506, Asn-529, Asn-551, and Asn-562. A helical membrane pass occupies residues Met-582–Asn-599. The Cytoplasmic portion of the chain corresponds to Lys-600 to Ser-609.

The protein belongs to the ephemerovirus glycoprotein family.

It localises to the membrane. The protein is Non-structural glycoprotein (GNS) of Adelaide River virus (ARV).